A 1614-amino-acid chain; its full sequence is Chitin synthase csmA (1614 aa).

A disordered region spans residues 1-22 (MAGPAPSGRTPSHAQSSLPSLP). The region spanning 1–788 (MAGPAPSGRT…CWADLAKLGE (788 aa)) is the Myosin motor domain. Positions 9–19 (RTPSHAQSSLP) are enriched in polar residues. 105 to 112 (GESGSGKT) contributes to the ATP binding site. The interval 600 to 650 (QVSSKPMRMPSMARRKAGPSRLAFDAPEGDDQDEYDSQAGSMSKSSARRKS) is disordered. The span at 626–635 (PEGDDQDEYD) shows a compositional bias: acidic residues. The actin-binding stretch occupies residues 668–692 (LDIVSKCLNSANLNPYFVFCLKPND). 2 helical membrane passes run 898–918 (WMAI…KTFG) and 937–957 (LIIW…PGLI). In terms of domain architecture, Cytochrome b5 heme-binding spans 961 to 1020 (QHVYSTAELSSHNGKDGHNSFVAIRGIVFNLDKFMPSHYPDIVPEKSLKKYAGTDATGLF). Residues N1047 and N1072 are each glycosylated (N-linked (GlcNAc...) asparagine). A helical membrane pass occupies residues 1209–1229 (FILAISIFICLIVVFKFLAAL). A glycan (N-linked (GlcNAc...) asparagine) is linked at N1572.

The protein in the N-terminal section; belongs to the TRAFAC class myosin-kinesin ATPase superfamily. Myosin family. In the C-terminal section; belongs to the chitin synthase family. Class V subfamily.

It localises to the cell membrane. The protein resides in the cell septum. The protein localises to the cell tip. It carries out the reaction [(1-&gt;4)-N-acetyl-beta-D-glucosaminyl](n) + UDP-N-acetyl-alpha-D-glucosamine = [(1-&gt;4)-N-acetyl-beta-D-glucosaminyl](n+1) + UDP + H(+). In terms of biological role, polymerizes chitin, a structural polymer of the cell wall and septum, by transferring the sugar moiety of UDP-GlcNAc to the non-reducing end of the growing chitin polymer. Acts as the major chitin synthase in Aspergillus niger involved in cell wall integrity which is principally responsible for chitin synthesis at the lateral cell wall. Plays an important role in septal growth or maintenance. Mediates colony spore formation. The sequence is that of Chitin synthase csmA from Aspergillus niger (strain ATCC MYA-4892 / CBS 513.88 / FGSC A1513).